The primary structure comprises 616 residues: Glutamine--fructose-6-phosphate aminotransferase [isomerizing] (616 aa).

C2 (nucleophile; for GATase activity) is an active-site residue. The Glutamine amidotransferase type-2 domain occupies 2–222; it reads CGIIGYSGPR…QERIVALSGD (221 aa). Residues 70 to 89 form a disordered region; sequence TGIGHTRWATHGEPSDRNAH. 2 consecutive SIS domains span residues 289-428 and 461-606; these read IRDD…LRGF and LAHW…VDRP. Residue K611 is the For Fru-6P isomerization activity of the active site.

As to quaternary structure, homodimer.

It is found in the cytoplasm. The enzyme catalyses D-fructose 6-phosphate + L-glutamine = D-glucosamine 6-phosphate + L-glutamate. Catalyzes the first step in hexosamine metabolism, converting fructose-6P into glucosamine-6P using glutamine as a nitrogen source. This Tropheryma whipplei (strain Twist) (Whipple's bacillus) protein is Glutamine--fructose-6-phosphate aminotransferase [isomerizing].